The sequence spans 570 residues: Formate--tetrahydrofolate ligase (570 aa).

ATP is bound at residue 65 to 72; sequence TPHGEGKT.

The protein belongs to the formate--tetrahydrofolate ligase family.

The enzyme catalyses (6S)-5,6,7,8-tetrahydrofolate + formate + ATP = (6R)-10-formyltetrahydrofolate + ADP + phosphate. Its pathway is one-carbon metabolism; tetrahydrofolate interconversion. The sequence is that of Formate--tetrahydrofolate ligase from Shewanella oneidensis (strain ATCC 700550 / JCM 31522 / CIP 106686 / LMG 19005 / NCIMB 14063 / MR-1).